Here is a 465-residue protein sequence, read N- to C-terminus: Pancreatic triacylglycerol lipase (465 aa).

Residues 1-16 form the signal peptide; it reads MLLLWALPLLLGAVAG. Intrachain disulfides connect Cys20–Cys26 and Cys108–Cys119. The active-site Nucleophile is Ser170. Asp194 acts as the Charge relay system in catalysis. Glu205, Arg208, Asp210, and Asp213 together coordinate Ca(2+). Cysteines 255 and 279 form a disulfide. The active-site Charge relay system is the His281. 3 disulfide bridges follow: Cys303–Cys314, Cys317–Cys321, and Cys449–Cys465. Residues 355 to 465 form the PLAT domain; the sequence is WRYQVAVTLS…EDILLTLTPC (111 aa).

The protein belongs to the AB hydrolase superfamily. Lipase family. In terms of assembly, forms a 1:1 stoichiometric complex with (pro)colipase/CLPS.

It localises to the secreted. The catalysed reaction is a triacylglycerol + H2O = a diacylglycerol + a fatty acid + H(+). It carries out the reaction 1,2,3-tributanoylglycerol + H2O = dibutanoylglycerol + butanoate + H(+). It catalyses the reaction 1,2,3-tri-(9Z-octadecenoyl)-glycerol + H2O = di-(9Z)-octadecenoylglycerol + (9Z)-octadecenoate + H(+). The enzyme catalyses all-trans-retinyl hexadecanoate + H2O = all-trans-retinol + hexadecanoate + H(+). The catalysed reaction is 1,2-di-(9Z-octadecenoyl)-glycerol + H2O = (9Z-octadecenoyl)-glycerol + (9Z)-octadecenoate + H(+). With respect to regulation, inhibited by bile salts, is reactivated by (pro)colipase/CLPS. Functionally, plays an important role in fat metabolism. It preferentially splits the esters of long-chain fatty acids at positions 1 and 3, producing mainly 2-monoacylglycerol and free fatty acids, and shows considerably higher activity against insoluble emulsified substrates than against soluble ones. This is Pancreatic triacylglycerol lipase (PNLIP) from Oryctolagus cuniculus (Rabbit).